A 466-amino-acid chain; its full sequence is Asparagine--tRNA ligase (466 aa).

The protein belongs to the class-II aminoacyl-tRNA synthetase family. In terms of assembly, homodimer.

The protein localises to the cytoplasm. The catalysed reaction is tRNA(Asn) + L-asparagine + ATP = L-asparaginyl-tRNA(Asn) + AMP + diphosphate + H(+). The polypeptide is Asparagine--tRNA ligase (Buchnera aphidicola subsp. Acyrthosiphon pisum (strain APS) (Acyrthosiphon pisum symbiotic bacterium)).